A 361-amino-acid chain; its full sequence is FK506-binding protein 39 kDa (361 aa).

The tract at residues 122–256 (LVDEEDEEEE…PSSPKTRTLK (135 aa)) is disordered. The segment covering 123–174 (VDEEDEEEEESDEDYDLSPTEEDLVETVSGDEESEEESESEDNSASEEDELD) has biased composition (acidic residues). Ser-192 is modified (phosphoserine). Residues 208–227 (QKVEGTPVKEKKVAFAEKLE) are compositionally biased toward basic and acidic residues. Thr-213 carries the post-translational modification Phosphothreonine. Positions 241-252 (QASSNAPSSPKT) are enriched in polar residues. The residue at position 249 (Ser-249) is a Phosphoserine. Positions 275-361 (GKKVEMRYIG…VFEVKLVRVH (87 aa)) constitute a PPIase FKBP-type domain.

This sequence belongs to the FKBP-type PPIase family. FKBP3/4 subfamily.

It is found in the nucleus. Its subcellular location is the nucleolus. The catalysed reaction is [protein]-peptidylproline (omega=180) = [protein]-peptidylproline (omega=0). Its function is as follows. PPIase that acts as a histone chaperone. Histone proline isomerase that increases the rate of cis-trans isomerization at prolines on the histone H3 N-terminal tail. Proline isomerization influences H3 methylation thereby regulating gene expression. The protein is FK506-binding protein 39 kDa of Schizosaccharomyces pombe (strain 972 / ATCC 24843) (Fission yeast).